A 211-amino-acid polypeptide reads, in one-letter code: Putative ATP-dependent Clp protease proteolytic subunit-like (211 aa).

A disordered region spans residues 1–24; sequence MTRPSARHVLPEFTERTSAGTRTS. The active site involves H129.

Belongs to the peptidase S14 family.

Functionally, has lost one of the conserved residue (Ser) proposed to be part of the active site. Therefore it could be inactive. The sequence is that of Putative ATP-dependent Clp protease proteolytic subunit-like from Streptomyces coelicolor (strain ATCC BAA-471 / A3(2) / M145).